Consider the following 514-residue polypeptide: 2,3-bisphosphoglycerate-independent phosphoglycerate mutase (514 aa).

Mn(2+) contacts are provided by Asp-14 and Ser-64. Ser-64 serves as the catalytic Phosphoserine intermediate. Substrate-binding positions include His-125, 155–156 (RD), Arg-187, Arg-193, 263–266 (RADR), and Lys-336. Residues Asp-403, His-407, Asp-444, His-445, and His-463 each coordinate Mn(2+).

It belongs to the BPG-independent phosphoglycerate mutase family. In terms of assembly, monomer. It depends on Mn(2+) as a cofactor.

The catalysed reaction is (2R)-2-phosphoglycerate = (2R)-3-phosphoglycerate. It functions in the pathway carbohydrate degradation; glycolysis; pyruvate from D-glyceraldehyde 3-phosphate: step 3/5. Catalyzes the interconversion of 2-phosphoglycerate and 3-phosphoglycerate. In Shewanella sediminis (strain HAW-EB3), this protein is 2,3-bisphosphoglycerate-independent phosphoglycerate mutase.